Consider the following 381-residue polypeptide: Succinyl-diaminopimelate desuccinylase (381 aa).

A Zn(2+)-binding site is contributed by histidine 68. Aspartate 70 is a catalytic residue. Aspartate 101 is a Zn(2+) binding site. Catalysis depends on glutamate 135, which acts as the Proton acceptor. Zn(2+)-binding residues include glutamate 136, glutamate 164, and histidine 350.

It belongs to the peptidase M20A family. DapE subfamily. Homodimer. It depends on Zn(2+) as a cofactor. Requires Co(2+) as cofactor.

It catalyses the reaction N-succinyl-(2S,6S)-2,6-diaminopimelate + H2O = (2S,6S)-2,6-diaminopimelate + succinate. Its pathway is amino-acid biosynthesis; L-lysine biosynthesis via DAP pathway; LL-2,6-diaminopimelate from (S)-tetrahydrodipicolinate (succinylase route): step 3/3. Functionally, catalyzes the hydrolysis of N-succinyl-L,L-diaminopimelic acid (SDAP), forming succinate and LL-2,6-diaminopimelate (DAP), an intermediate involved in the bacterial biosynthesis of lysine and meso-diaminopimelic acid, an essential component of bacterial cell walls. This chain is Succinyl-diaminopimelate desuccinylase, found in Neisseria gonorrhoeae (strain NCCP11945).